The primary structure comprises 82 residues: Small ribosomal subunit protein uS17c (82 aa).

This sequence belongs to the universal ribosomal protein uS17 family. As to quaternary structure, part of the 30S ribosomal subunit.

It localises to the plastid. The protein localises to the chloroplast. Functionally, one of the primary rRNA binding proteins, it binds specifically to the 5'-end of 16S ribosomal RNA. This chain is Small ribosomal subunit protein uS17c (rps17), found in Cyanidioschyzon merolae (strain NIES-3377 / 10D) (Unicellular red alga).